The sequence spans 102 residues: Urease subunit beta (102 aa).

The protein belongs to the urease beta subunit family. As to quaternary structure, heterotrimer of UreA (gamma), UreB (beta) and UreC (alpha) subunits. Three heterotrimers associate to form the active enzyme.

It is found in the cytoplasm. It carries out the reaction urea + 2 H2O + H(+) = hydrogencarbonate + 2 NH4(+). The protein operates within nitrogen metabolism; urea degradation; CO(2) and NH(3) from urea (urease route): step 1/1. The sequence is that of Urease subunit beta from Trichodesmium erythraeum (strain IMS101).